Consider the following 717-residue polypeptide: Translation initiation factor eIF2B subunit epsilon (717 aa).

The segment covering 1-14 (MAATAAVPGAAAGR) has biased composition (low complexity). A disordered region spans residues 1-37 (MAATAAVPGAAAGRASKRGGGGSGGGGTQGAEEEPPP). R18 carries the post-translational modification Omega-N-methylarginine. Residues 18–29 (RGGGGSGGGGTQ) are compositionally biased toward gly residues. Phosphoserine is present on S23. Residues K57 and K99 each participate in a glycyl lysine isopeptide (Lys-Gly) (interchain with G-Cter in ubiquitin) cross-link. Position 126 is a phosphoserine (S126). Residues K137 and K213 each participate in a glycyl lysine isopeptide (Lys-Gly) (interchain with G-Cter in ubiquitin) cross-link. At T318 the chain carries Phosphothreonine. The tract at residues 442 to 479 (GSVISLHPPDAEEDEDDGQFSDDSGADQEKEKVKLKGY) is disordered. 3 positions are modified to phosphoserine: S446, S462, and S465. Residues 452 to 467 (AEEDEDDGQFSDDSGA) are compositionally biased toward acidic residues. K501 is covalently cross-linked (Glycyl lysine isopeptide (Lys-Gly) (interchain with G-Cter in ubiquitin)). A disordered region spans residues 517 to 538 (TEEESETESEGSVDPEELDSRA). The span at 519–533 (EESETESEGSVDPEE) shows a compositional bias: acidic residues. Phosphoserine is present on residues S528 and S536. Residues 539 to 716 (GSPQLDDIRV…REAEEESSED (178 aa)) form the W2 domain. Phosphoserine; by DYRK2 is present on S540. At S713 the chain carries Phosphoserine.

This sequence belongs to the eIF-2B gamma/epsilon subunits family. Component of the translation initiation factor 2B (eIF2B) complex which is a heterodecamer of two sets of five different subunits: alpha, beta, gamma, delta and epsilon. Subunits alpha, beta and delta comprise a regulatory subcomplex and subunits epsilon and gamma comprise a catalytic subcomplex. Within the complex, the hexameric regulatory complex resides at the center, with the two heterodimeric catalytic subcomplexes bound on opposite sides. Phosphorylated at Ser-540 by DYRK2; this is required for subsequent phosphorylation by GSK3B. Phosphorylated on serine and threonine residues by GSK3B; phosphorylation inhibits its function. Post-translationally, polyubiquitinated, probably by NEDD4.

It localises to the cytoplasm. It is found in the cytosol. With respect to regulation, activated by the chemical integrated stress response (ISR) inhibitor ISRIB which stimulates guanine nucleotide exchange factor activity for both phosphorylated and unphosphorylated eIF2. Its function is as follows. Acts as a component of the translation initiation factor 2B (eIF2B) complex, which catalyzes the exchange of GDP for GTP on eukaryotic initiation factor 2 (eIF2) gamma subunit. Its guanine nucleotide exchange factor activity is repressed when bound to eIF2 complex phosphorylated on the alpha subunit, thereby limiting the amount of methionyl-initiator methionine tRNA available to the ribosome and consequently global translation is repressed. The chain is Translation initiation factor eIF2B subunit epsilon (Eif2b5) from Mus musculus (Mouse).